The sequence spans 150 residues: UPF0735 ACT domain-containing protein Helmi_18680 (150 aa).

In terms of domain architecture, ACT spans 72 to 147; sequence SVSLLLEHHP…GVRSAQLVGS (76 aa).

It belongs to the UPF0735 family.

This Heliobacterium modesticaldum (strain ATCC 51547 / Ice1) protein is UPF0735 ACT domain-containing protein Helmi_18680.